The chain runs to 700 residues: MSADKFYIEKELSWLSFNERVLQEAADKTVPLIERIRFLGIFSNNLDEFYKVRFSDVKRRILINREQGGNDISKHLLSKMQSKALKLNERFDELYNELIRDMARRHIFLVNESQLDEAQQKWIIKYFQKEVLPHITPLMLTDEIDVLQFLKDEYAYIAVELKQQEQAKYALLEIPTDHLPRFIMVPEQKGKRKKTIILLDNIIRFCLNDIFRGFFDYDELNGYAMKMTRDAEYDLRHEVEYSLLEQMSEGLSQRLTALPVRFVYERDMPEDMLKYLCYKLKISHYDSLIPGGRYHNFKDFIAFPNVGRDYLENKPLPPLACADFEGYANAFDAIRNQDILLHYPYHSFEHITELVRQASFDPKVVSIKINVYRVAKNSRLMNSLIDAVHNGKRVTVVVELQARFDEEANIEWSKRLTDAGVHVIFGVPGMKIHAKLLLITRREEQGFVRYAHIGTGNFHERTARIYTDFSLLTADQELAAEVRGVFSYIMNPFRPIKFRHLIVSPRNSRSQLYRLLDREIHNAQAGKKASITLKVNNLVDKGLISKLYAASSAGVKIRMIIRGMCSLVPGLEGISENIEIISIIDRFLEHPRVLVVHNDGDPQVFISSADWMERNIDNRIEVMSPVRDARIKQRIIDILSIQFTDTVKARRIDKEMSNNYVERGNRKKIRSQIAIYDYLKNVEKHTRKQKGQVEPNDNNE.

ATP is bound at residue Asn-45. Mg(2+)-binding residues include Arg-373 and Arg-403. The PLD phosphodiesterase 1 domain maps to 428 to 462 (PGMKIHAKLLLITRREEQGFVRYAHIGTGNFHERT). Catalysis depends on His-433, which acts as the Phosphohistidine intermediate. ATP-binding residues include Tyr-466, Arg-562, and His-590. Residues 585–615 (DRFLEHPRVLVVHNDGDPQVFISSADWMERN) enclose the PLD phosphodiesterase 2 domain.

It belongs to the polyphosphate kinase 1 (PPK1) family. The cofactor is Mg(2+). In terms of processing, an intermediate of this reaction is the autophosphorylated ppk in which a phosphate is covalently linked to a histidine residue through a N-P bond.

It catalyses the reaction [phosphate](n) + ATP = [phosphate](n+1) + ADP. Functionally, catalyzes the reversible transfer of the terminal phosphate of ATP to form a long-chain polyphosphate (polyP). This is Polyphosphate kinase from Vibrio vulnificus (strain YJ016).